The chain runs to 207 residues: Ras-related protein Rab-8B (207 aa).

GTP-binding residues include Ser17, Gly18, Val19, Gly20, Lys21, Thr22, Cys23, Thr35, Ser39, and Thr40. Thr22 provides a ligand contact to Mg(2+). 2 short sequence motifs (switch) span residues 31–45 (DAFN…GIDF) and 63–80 (DTAG…YYRG). Residues Thr40 and Asp63 each contribute to the Mg(2+) site. Gly66 contributes to the GTP binding site. Position 72 is a phosphothreonine; by LRRK2 (Thr72). Residues Asn121, Lys122, Asp124, Ala152, and Lys153 each contribute to the GTP site. Ser180 is modified (phosphoserine). Cys204 carries the post-translational modification Cysteine methyl ester. A lipid anchor (S-geranylgeranyl cysteine) is attached at Cys204. Positions 205 to 207 (SLL) are cleaved as a propeptide — removed in mature form.

It belongs to the small GTPase superfamily. Rab family. Associated with actin, delta-catenin and alpha and beta tubulins. Interacts with OTOF. Interacts with PEX5R. Interacts with RAB3IP. Interacts with VIM. Interacts with CDH1. Interacts with MICALL2. Interacts with GDI1, GDI2, CHML and CHM; phosphorylation at Thr-72 disrupts these interactions. Interacts with MICAL1. Requires Mg(2+) as cofactor. Post-translationally, phosphorylation of Thr-72 in the switch II region by LRRK2 prevents the association of RAB regulatory proteins, including CHM, CHML and RAB GDP dissociation inhibitors GDI1 and GDI2.

It localises to the cell membrane. Its subcellular location is the cytoplasmic vesicle. It is found in the phagosome. The protein resides in the phagosome membrane. The protein localises to the endosome membrane. It catalyses the reaction GTP + H2O = GDP + phosphate + H(+). Its activity is regulated as follows. Regulated by guanine nucleotide exchange factors (GEFs) including RAB3IP/RABIN8 which promotes the exchange of bound GDP for free GTP. Regulated by GTPase activating proteins (GAPs) which increase the GTP hydrolysis activity. Inhibited by GDP dissociation inhibitors (GDIs). The small GTPases Rab are key regulators of intracellular membrane trafficking, from the formation of transport vesicles to their fusion with membranes. Rabs cycle between an inactive GDP-bound form and an active GTP-bound form that is able to recruit to membranes different sets of downstream effectors directly responsible for vesicle formation, movement, tethering and fusion. RAB8B may be involved in polarized vesicular trafficking and neurotransmitter release. May participate in cell junction dynamics in Sertoli cells. May also participate in the export of a subset of neosynthesized proteins through a Rab8-Rab10-Rab11-dependent endososomal export route. This Homo sapiens (Human) protein is Ras-related protein Rab-8B.